The sequence spans 344 residues: Phosphoserine phosphatase (344 aa).

An ACT domain is found at 48 to 120 (VVTILGKDRV…ERLGLDIVMQ (73 aa)). The Nucleophile role is filled by aspartate 135. Residues aspartate 135 and aspartate 137 each coordinate Mg(2+). Residue aspartate 137 is the Proton donor of the active site. Substrate-binding positions include glutamate 144, arginine 180, 223–224 (SG), and lysine 268. Aspartate 291 contacts Mg(2+).

This sequence belongs to the HAD-like hydrolase superfamily. SerB family. The cofactor is Mg(2+).

It catalyses the reaction O-phospho-L-serine + H2O = L-serine + phosphate. The catalysed reaction is O-phospho-D-serine + H2O = D-serine + phosphate. It participates in amino-acid biosynthesis; L-serine biosynthesis; L-serine from 3-phospho-D-glycerate: step 3/3. The protein is Phosphoserine phosphatase of Archaeoglobus fulgidus (strain ATCC 49558 / DSM 4304 / JCM 9628 / NBRC 100126 / VC-16).